Consider the following 497-residue polypeptide: Pancreatic alpha-amylase (497 aa).

Pyrrolidone carboxylic acid is present on Gln-1. 3 disulfide bridges follow: Cys-28/Cys-86, Cys-70/Cys-115, and Cys-141/Cys-160. Ca(2+) contacts are provided by Asn-100, Arg-158, and Asp-167. Residue Arg-195 participates in chloride binding. Catalysis depends on Asp-197, which acts as the Nucleophile. His-201 serves as a coordination point for Ca(2+). The active-site Proton donor is Glu-233. Residues Asn-298 and Arg-337 each coordinate chloride. Disulfide bonds link Cys-379-Cys-385 and Cys-451-Cys-463.

This sequence belongs to the glycosyl hydrolase 13 family. Monomer. The cofactor is Ca(2+). It depends on chloride as a cofactor.

Its subcellular location is the secreted. The protein resides in the extracellular space. It catalyses the reaction Endohydrolysis of (1-&gt;4)-alpha-D-glucosidic linkages in polysaccharides containing three or more (1-&gt;4)-alpha-linked D-glucose units.. This is Pancreatic alpha-amylase from Struthio camelus (Common ostrich).